The sequence spans 920 residues: Alpha-L-rhamnosidase (920 aa).

A signal peptide spans 1–19; the sequence is MCVVRTFWFAVLTVIFAVS. Residue Cys20 is the site of N-palmitoyl cysteine attachment. Residue Cys20 is the site of S-diacylglycerol cysteine attachment. Residues Asp500, 504 to 506, Asp513, and Trp565 contribute to the alpha-L-rhamnose site; that span reads RDE. The active-site Proton donor is Glu506. Glu779 acts as the Proton acceptor in catalysis. Residue His800 participates in alpha-L-rhamnose binding.

It belongs to the glycosyl hydrolase 78 family.

It is found in the cell membrane. The catalysed reaction is Hydrolysis of terminal non-reducing alpha-L-rhamnose residues in alpha-L-rhamnosides.. Its function is as follows. Alpha-L-rhamnosidase involved in ulvan degradation. Ulvan is the main polysaccharide component of the Ulvales (green seaweed) cell wall. It is composed of disaccharide building blocks comprising 3-sulfated rhamnose (Rha3S) linked to D-glucuronic acid (GlcA), L-iduronic acid (IduA), or D-xylose (Xyl). The enzyme is able to degrade p-nitrophenyl-alpha-L-rhamnopyranoside (PNP-Rha) in vitro. Incubating the enzyme with the products obtained after degradation with ulvan lyase and beta-glucuronyl hydrolase (i.e. the trisaccharides beta-alpha-L-Rha3S-IduA-Rha3S and beta-alpha-L-Rha3S-GlcA-Rha3S) showed no degradation, suggesting that the enzyme is active on neutral rhamnose and that desulfation of the oligosaccharide must be achieved before cleavage of rhamnose. This chain is Alpha-L-rhamnosidase, found in Alteromonas sp. (strain LOR).